The chain runs to 550 residues: Sterol O-acyltransferase 1 (550 aa).

N-acetylmethionine is present on Met-1. A disordered region spans residues 1–36; sequence MVGEEKMSLRNRLSKSRENPEEDEDQRKPAKESLEA. The Cytoplasmic portion of the chain corresponds to 1-138; the sequence is MVGEEKMSLR…LDELLEVDHI (138 aa). A Phosphoserine modification is found at Ser-8. Residues 15–34 are compositionally biased toward basic and acidic residues; the sequence is KSRENPEEDEDQRKPAKESL. His-137 is a cholesterol binding site. A helical membrane pass occupies residues 139-160; the sequence is RTIYHMFIALLILFILSTLVVD. Over 161–180 the chain is Lumenal; the sequence is YIDEGRLVLEFSLLSYAFGK. The chain crosses the membrane as a helical span at residues 181–206; it reads FPTVVWTWWIMFLSTFSVPYFLFQRW. Over 207–218 the chain is Cytoplasmic; sequence ATGYSKSSHPLI. A helical membrane pass occupies residues 219–244; the sequence is NSLFHGFLFMVFQIGILGFGPTYVVL. The Lumenal segment spans residues 245–252; that stretch reads AYTLPPAS. Residues 253-276 form a helical membrane-spanning segment; the sequence is RFIIIFEQIRFVMKAHSFVRENVP. Over 277 to 319 the chain is Cytoplasmic; sequence RVLNSAKEKSSTVPIPTVNQYLYFLFAPTLIYRDSYPRNPTVR. The chain crosses the membrane as a helical span at residues 320–352; it reads WGYVAMQFAQVFGCFFYVYYIFERLCAPLFRNI. Topologically, residues 353-369 are lumenal; the sequence is KQEPFSARVLVLCVFNS. A helical membrane pass occupies residues 370–395; the sequence is ILPGVLILFLTFFAFLHCWLNAFAEM. Over 396–443 the chain is Cytoplasmic; the sequence is LRFGDRMFYKDWWNSTSYSNYYRTWNVVVHDWLYYYAYKDFLWFFSKR. An FYXDWWN motif motif is present at residues 403–409; it reads FYKDWWN. An acyl-CoA-binding residues include Asn-415, Arg-418, Asn-421, His-425, Tyr-433, Lys-445, and Ser-456. The helical transmembrane segment at 444–468 threads the bilayer; it reads FKSAAMLAVFAVSAVVHEYALAVCL. His-460 is an active-site residue. Over 469–474 the chain is Lumenal; that stretch reads SFFYPV. The chain crosses the membrane as a helical span at residues 475–490; the sequence is LFVLFMFFGMAFNFIV. At 491–496 the chain is on the cytoplasmic side; that stretch reads NDSRKK. The helical transmembrane segment at 497–528 threads the bilayer; that stretch reads PIWNVMMWTSLFLGNGVLLCFYSQEWYARQHC. Residues Cys-528 and Cys-546 are joined by a disulfide bond. The Lumenal portion of the chain corresponds to 529–550; that stretch reads PLKNPTFLDYVRPRSWTCRYVF.

Belongs to the membrane-bound acyltransferase family. Sterol o-acyltransferase subfamily. May form homo- or heterodimers. Interacts with UBIAD1. In terms of tissue distribution, expressed in most tissues, but most strongly in the adrenal gland. Expressed more strongly in liver Kupffer cells than in hepatocytes.

It is found in the endoplasmic reticulum membrane. The enzyme catalyses a sterol + a long-chain fatty acyl-CoA = a long-chain 3-hydroxysterol ester + CoA. It carries out the reaction cholesterol + an acyl-CoA = a cholesterol ester + CoA. It catalyses the reaction cholesterol + (9Z)-octadecenoyl-CoA = cholesteryl (9Z-octadecenoate) + CoA. The catalysed reaction is cholesterol + hexadecanoyl-CoA = cholesteryl hexadecanoate + CoA. The enzyme catalyses octadecanoyl-CoA + cholesterol = cholesteryl octadecanoate + CoA. It carries out the reaction (9Z,12Z)-octadecadienoyl-CoA + cholesterol = cholesteryl (9Z,12Z)-octadecadienoate + CoA. It catalyses the reaction (5Z,8Z,11Z,14Z)-eicosatetraenoyl-CoA + cholesterol = cholesteryl (5Z,8Z,11Z,14Z)-eicosatetraenoate + CoA. The catalysed reaction is (9Z)-hexadecenoyl-CoA + cholesterol = cholesteryl (9Z)-hexadecenoate + CoA. The enzyme catalyses (11Z)-octadecenoyl-CoA + cholesterol = cholesteryl (11Z)-octadecenoate + CoA. It carries out the reaction (7Z)-octadecenoyl-CoA + cholesterol = cholesteryl (7Z)-octadecenoate + CoA. In terms of biological role, catalyzes the formation of fatty acid-cholesterol esters, which are less soluble in membranes than cholesterol. Plays a role in lipoprotein assembly and dietary cholesterol absorption. Preferentially utilizes oleoyl-CoA ((9Z)-octadecenoyl-CoA) as a substrate: shows a higher activity towards an acyl-CoA substrate with a double bond at the delta-9 position (9Z) than towards saturated acyl-CoA or an unsaturated acyl-CoA with a double bond at the delta-7 (7Z) or delta-11 (11Z) positions. The protein is Sterol O-acyltransferase 1 (SOAT1) of Chlorocebus aethiops (Green monkey).